The chain runs to 554 residues: Solute carrier family 22 member 22 (554 aa).

Over 1–15 (MDFDEILHHVGDSGR) the chain is Cytoplasmic. A helical membrane pass occupies residues 16–36 (FQICMIILLNILSLVLSPHDV). Topologically, residues 37 to 144 (LENFTAAIPA…DLVCDFQSFK (108 aa)) are extracellular. Asn-39 is a glycosylation site (N-linked (GlcNAc...) asparagine). A helical membrane pass occupies residues 145–165 (YYAQATSLAGHLVSCPLSGII). Topologically, residues 166 to 172 (SDRFGRK) are cytoplasmic. A helical membrane pass occupies residues 173-193 (PLLMYCSLAYGAVGTYCAFAP). Asn-194 carries N-linked (GlcNAc...) asparagine glycosylation. At 194 to 199 (NFSVYC) the chain is on the extracellular side. The helical transmembrane segment at 200 to 220 (VLRFLLSAFQSTILINSLILV) threads the bilayer. The Cytoplasmic segment spans residues 221 to 231 (LEEASVQWHPT). Residues 232 to 252 (IIVLSGLFNSIGQGVLGGLAY) traverse the membrane as a helical segment. At 253–258 (VISDWH) the chain is on the extracellular side. The chain crosses the membrane as a helical span at residues 259-279 (LLQLAYALPFFIFFVLFCWVP). The Cytoplasmic portion of the chain corresponds to 280–347 (ESVRWLIITG…DIFINPLIRK (68 aa)). A helical membrane pass occupies residues 348-368 (IVLSNSSLLFAELFSFVGLLL). At 369–376 (DVQLLGKN) the chain is on the extracellular side. A helical membrane pass occupies residues 377–397 (MFLTQIFLGAIDVPSKSLTYF). Topologically, residues 398–405 (TIRNVSRR) are cytoplasmic. The helical transmembrane segment at 406-426 (PLIAFLLLTTGSCITITIFIS) threads the bilayer. Topologically, residues 427–434 (EEMYVLRT) are extracellular. A helical membrane pass occupies residues 435-455 (IIFILGKGCFAAFTCISTTYI). At 456-466 (NELSPVELRST) the chain is on the cytoplasmic side. A helical membrane pass occupies residues 467–487 (LNGVFLAVVRLAGVLSALTLA). Residues 488–491 (TRKY) are Extracellular-facing. A helical transmembrane segment spans residues 492–512 (FVYLPMILYGVLPIVATISIL). Topologically, residues 513–554 (FLPETFNLPHTDIIKDMEKRKRLMSKNISKKEGQDFLETTEC) are cytoplasmic.

The protein belongs to the major facilitator (TC 2.A.1) superfamily. Organic cation transporter (TC 2.A.1.19) family. In terms of tissue distribution, specifically expressed in kidney where it is found in proximal convoluted tubules (at protein level). Colocalizes with the prostaglandin-inactivating enzyme HPGD in kidney (at protein level). Not detected in other tissues tested.

It localises to the basolateral cell membrane. In terms of biological role, sodium-independent organic anion transporter which exhibits high specificity for a subset of prostaglandins including prostaglandin E2 (PGE2), prostaglandin E1 (PGE1), prostaglandin F2-alpha (PGF2-alpha) and prostaglandin D2 (PGD2). This chain is Solute carrier family 22 member 22, found in Mus musculus (Mouse).